Consider the following 373-residue polypeptide: GDSL esterase/lipase LIP-4 (373 aa).

Positions 1–32 (MATLFLYSNTFSFFFITLVSLALLILRQPSRA) are cleaved as a signal peptide. Catalysis depends on Ser-47, which acts as the Nucleophile. An N-linked (GlcNAc...) asparagine glycan is attached at Asn-93. Residues Asp-339 and His-342 contribute to the active site.

This sequence belongs to the 'GDSL' lipolytic enzyme family.

It is found in the secreted. The protein is GDSL esterase/lipase LIP-4 (LIP4) of Arabidopsis thaliana (Mouse-ear cress).